The primary structure comprises 374 residues: Flagellar P-ring protein (374 aa).

A signal peptide spans 1–29 (MSGLGFTGVVRIAVMALLALAFLGAPAHA). The segment covering 296–311 (ESPQVSQPNPLSNGRT) has biased composition (polar residues). Residues 296–316 (ESPQVSQPNPLSNGRTVMTPR) form a disordered region.

The protein belongs to the FlgI family. The basal body constitutes a major portion of the flagellar organelle and consists of four rings (L,P,S, and M) mounted on a central rod.

It is found in the periplasm. Its subcellular location is the bacterial flagellum basal body. Its function is as follows. Assembles around the rod to form the L-ring and probably protects the motor/basal body from shearing forces during rotation. The polypeptide is Flagellar P-ring protein (Nitrobacter winogradskyi (strain ATCC 25391 / DSM 10237 / CIP 104748 / NCIMB 11846 / Nb-255)).